A 292-amino-acid chain; its full sequence is 33 kDa chaperonin (292 aa).

2 disulfide bridges follow: Cys230–Cys232 and Cys263–Cys266.

Belongs to the HSP33 family. In terms of processing, under oxidizing conditions two disulfide bonds are formed involving the reactive cysteines. Under reducing conditions zinc is bound to the reactive cysteines and the protein is inactive.

The protein localises to the cytoplasm. Functionally, redox regulated molecular chaperone. Protects both thermally unfolding and oxidatively damaged proteins from irreversible aggregation. Plays an important role in the bacterial defense system toward oxidative stress. This is 33 kDa chaperonin from Serratia proteamaculans (strain 568).